The chain runs to 368 residues: MSTILLNLDFGQPSKKAFGGNAKHQRFVKKRRFLEQKGFLNKKNQPPNKVSKLNSEPPKKGETSRVDGILKILPCPKKKEAAASKRDSERSKDKKAPLSWLTPAPSKKTASVVSKIDLLGEFQSALPKTKSTQKKGSKKKSLKKKIATENSTQAQSKDKGSKKKPLKKNAVPNSTQARSEDKCPTVPQNLPGKMVAIDCEMVGTGPKGRVSSLARCSIVNYNGDVLYDEYVLPPCYIVNYRTRWSGIRKCHMVNATPFKTARSQILKILSGKVVIGHAIHNDYKALQYFHPKSLTRDTSRIPLLNRKADCPENVTLSLKHLTKKLLSRDIQVGNTGHSSVEDAQATMELYKLVEVEWEQHLAQNPPEN.

Disordered stretches follow at residues F33–K107 and P127–P187. The segment covering K42–N54 has biased composition (polar residues). A compositionally biased stretch (basic and acidic residues) spans K77–A96. Basic residues predominate over residues S131–K145. Positions M194–N368 constitute an Exonuclease domain.

Its subcellular location is the nucleus. The protein resides in the nucleolus. Functionally, 3'-&gt; 5'-exoribonuclease involved in ribosome biogenesis in the processing of the 12S pre-rRNA. Displays a strong specificity for a 3'-end containing a free hydroxyl group. The chain is Interferon-stimulated 20 kDa exonuclease-like 2 (Isg20l2) from Mus musculus (Mouse).